Consider the following 505-residue polypeptide: Trans-cinnamate 4-monooxygenase (505 aa).

Residues 3–23 (LLLLEKTLLGSFVAVLVAILV) form a helical membrane-spanning segment. Residues 213–218 (RSRLAQ) and Ala306 contribute to the (E)-cinnamate site. Cys447 contributes to the heme binding site.

It belongs to the cytochrome P450 family. Heme serves as cofactor.

The protein localises to the membrane. The enzyme catalyses (E)-cinnamate + reduced [NADPH--hemoprotein reductase] + O2 = (E)-4-coumarate + oxidized [NADPH--hemoprotein reductase] + H2O + H(+). It functions in the pathway phenylpropanoid metabolism; trans-4-coumarate biosynthesis; trans-4-coumarate from trans-cinnamate: step 1/1. Functionally, catalyzes the first oxidative step of the phenylpropanoid pathway in higher plants by transforming trans-cinnamate into p-coumarate. The compounds formed by this pathway are essential components for lignification, pollination, and defense against ultraviolet light, predators and pathogens. This Populus kitakamiensis (Aspen) protein is Trans-cinnamate 4-monooxygenase (CYP73A16).